Here is a 327-residue protein sequence, read N- to C-terminus: Pumilio homolog 18 (327 aa).

Residues 1-324 (MAVADNPFSM…NIANILDSFR (324 aa)) form the PUM-HD domain. 6 Pumilio repeats span residues 79 to 114 (SDSD…FCAA), 115 to 149 (ILRR…ALYE), 150 to 185 (RILY…DQLL), 186 to 222 (ELVA…NIAV), 223 to 260 (NLYG…ELLG), and 261 to 295 (CDGD…DLFW).

It localises to the cytoplasm. Sequence-specific RNA-binding protein that regulates translation and mRNA stability by binding the 3'-UTR of target mRNAs. The polypeptide is Pumilio homolog 18 (APUM18) (Arabidopsis thaliana (Mouse-ear cress)).